A 395-amino-acid polypeptide reads, in one-letter code: uncharacterized protein (395 aa).

12 consecutive transmembrane segments (helical) span residues 12 to 34, 44 to 66, 75 to 94, 99 to 121, 134 to 156, 160 to 182, 208 to 230, 245 to 264, 271 to 293, 298 to 320, 341 to 360, and 364 to 381; these read LLAS…TIYL, LIGY…FGIL, YMLL…TLVN, VVLF…KAWF, FSIN…TLLV, INLP…QIWV, LLWF…SCIS, VVAV…QYSV, ANIR…GFIF, LLLW…PGEY, LGWL…LTSL, and SLFV…VLML.

Belongs to the major facilitator superfamily.

The protein resides in the cell inner membrane. In terms of biological role, a transporter able to export peptides. When overexpressed, allows cells deleted for multiple peptidases (pepA, pepB, pepD and pepN) to grow in the presence of dipeptides Ala-Gln or Gly-Tyr which otherwise inhibit growth. Cells overexpressing this protein have decreased intracellular levels of Ala-Gln dipeptide, and in a system that produces the Ala-Gln dipeptide overproduction of this protein increases export of the dipeptide. This is an uncharacterized protein from Escherichia coli (strain K12).